The chain runs to 468 residues: Zinc finger protein 672 (468 aa).

C2H2-type zinc fingers lie at residues 15–37 (YSCS…ERAH), 43–65 (FCCL…RWTH), 71–93 (YICS…LGTH), and 100–123 (RPCR…ARQH). Residues 129–151 (HRCPLCARSFRQSALPFHLARAH) form a C2H2-type 5; degenerate zinc finger. 9 consecutive C2H2-type zinc fingers follow at residues 167–189 (YHCT…SRIH), 202–224 (HLCG…LQRH), 230–252 (FKCP…QRTH), 258–280 (YACS…QRSH), 286–308 (HVCA…QRSH), 314–336 (FPCP…LRTH), 342–364 (YHCE…LRNH), 370–392 (HKCP…RKTH), and 398–420 (AECT…QRSH).

This sequence belongs to the krueppel C2H2-type zinc-finger protein family.

The protein localises to the nucleus. Functionally, may be involved in transcriptional regulation. The polypeptide is Zinc finger protein 672 (Znf672) (Mus musculus (Mouse)).